Here is a 455-residue protein sequence, read N- to C-terminus: Proline--tRNA ligase (455 aa).

Residues Thr101, Glu103, and Arg132 each coordinate L-proline. Arg132, Glu134, Gln216, and Thr219 together coordinate ATP. His221 lines the L-proline pocket. Residues Ser253 and Arg255 each coordinate ATP. The interaction with tRNA stretch occupies residues 329-359; the sequence is EIKGVPLRIEVGPKDIENKKITLFRRDTMEK.

The protein belongs to the class-II aminoacyl-tRNA synthetase family. ProS type 3 subfamily. Homodimer. The dimer is functionally asymmetric: only one of the two active sites at a time is able to form prolyl-adenylate, and only one tRNA molecule binds per dimer.

Its subcellular location is the cytoplasm. It catalyses the reaction tRNA(Pro) + L-proline + ATP = L-prolyl-tRNA(Pro) + AMP + diphosphate. Its activity is regulated as follows. Inhibited by high concentrations of prolinamide. Functionally, catalyzes the attachment of proline to tRNA(Pro) in a two-step reaction: proline is first activated by ATP to form Pro-AMP and then transferred to the acceptor end of tRNA(Pro). Can inadvertently accommodate and process non-cognate amino acids such as cysteine and alanine. In Methanocaldococcus jannaschii (strain ATCC 43067 / DSM 2661 / JAL-1 / JCM 10045 / NBRC 100440) (Methanococcus jannaschii), this protein is Proline--tRNA ligase (proS).